An 821-amino-acid polypeptide reads, in one-letter code: Bifunctional dethiobiotin synthetase/7,8-diamino-pelargonic acid aminotransferase, mitochondrial (821 aa).

The interval 28 to 283 (SPAFAVFGAN…VHVLPPIPED (256 aa)) is dethiobiotin synthetase. 39–44 (GVGKTL) contributes to the ATP binding site. Threonine 43 provides a ligand contact to Mg(2+). Position 72 (threonine 72) interacts with substrate. Residue glutamate 194 participates in Mg(2+) binding. Position 194–197 (194–197 (ETAG)) interacts with ATP. Positions 316 to 820 (RLNSMQRKSK…AKVHRRLQKL (505 aa)) are 7,8-diamino-pelargonic acid aminotransferase. 374-375 (WW) provides a ligand contact to (8S)-8-amino-7-oxononanoate. 436–437 (GS) lines the pyridoxal 5'-phosphate pocket. Tyrosine 482 contacts (8S)-8-amino-7-oxononanoate. Aspartate 626 serves as a coordination point for pyridoxal 5'-phosphate. (8S)-8-amino-7-oxononanoate is bound by residues lysine 655 and glycine 689. Lysine 655 carries the post-translational modification N6-(pyridoxal phosphate)lysine. Residue serine 691 coordinates pyridoxal 5'-phosphate. Position 787 (arginine 787) interacts with (8S)-8-amino-7-oxononanoate.

It in the N-terminal section; belongs to the dethiobiotin synthetase family. This sequence in the C-terminal section; belongs to the class-III pyridoxal-phosphate-dependent aminotransferase family. BioA subfamily. It depends on Mg(2+) as a cofactor. Requires pyridoxal 5'-phosphate as cofactor.

The protein resides in the mitochondrion. The enzyme catalyses (7R,8S)-7,8-diammoniononanoate + CO2 + ATP = (4R,5S)-dethiobiotin + ADP + phosphate + 3 H(+). It carries out the reaction (8S)-8-amino-7-oxononanoate + S-adenosyl-L-methionine = S-adenosyl-4-methylsulfanyl-2-oxobutanoate + (7R,8S)-7,8-diammoniononanoate. It participates in cofactor biosynthesis; biotin biosynthesis; biotin from 7,8-diaminononanoate: step 1/2. It functions in the pathway cofactor biosynthesis; biotin biosynthesis; 7,8-diaminononanoate from 8-amino-7-oxononanoate (SAM route): step 1/1. Its function is as follows. Bifunctional enzyme that catalyzes two different reactions involved in the biotin biosynthesis. Catalyzes a mechanistically unusual reaction, the ATP-dependent insertion of CO2 between the N7 and N8 nitrogen atoms of 7,8-diaminopelargonic acid (DAPA) to form an ureido ring. Functionally, catalyzes the transfer of the alpha-amino group from S-adenosyl-L-methionine (SAM) to 7-keto-8-aminopelargonic acid (KAPA) to form 7,8-diaminopelargonic acid (DAPA). It is the only aminotransferase known to utilize SAM as an amino donor. This Oryza sativa subsp. japonica (Rice) protein is Bifunctional dethiobiotin synthetase/7,8-diamino-pelargonic acid aminotransferase, mitochondrial (BIO3-BIO1).